Reading from the N-terminus, the 278-residue chain is Phosphatidylglycerol--prolipoprotein diacylglyceryl transferase (278 aa).

The next 4 membrane-spanning stretches (helical) occupy residues 19–39, 49–69, 83–103, and 112–132; these read WYGILMATGVLVATLMAINEG, FIDFLLWAVPIGFIGARIYYV, IIAIWNGGIAIYGGLIAGLIV, and MLPPFLMLDIIAPGVMAAQVI. Arg-134 contacts a 1,2-diacyl-sn-glycero-3-phospho-(1'-sn-glycerol). 3 helical membrane-spanning segments follow: residues 174 to 194, 204 to 224, and 235 to 255; these read QPTYLYESALNLVGLILILSL, GEVFFSYVIWYAAVRFFVEGM, and IRVSQALSLILFFGAIILWVY.

The protein belongs to the Lgt family.

Its subcellular location is the cell membrane. It carries out the reaction L-cysteinyl-[prolipoprotein] + a 1,2-diacyl-sn-glycero-3-phospho-(1'-sn-glycerol) = an S-1,2-diacyl-sn-glyceryl-L-cysteinyl-[prolipoprotein] + sn-glycerol 1-phosphate + H(+). Its pathway is protein modification; lipoprotein biosynthesis (diacylglyceryl transfer). Its function is as follows. Catalyzes the transfer of the diacylglyceryl group from phosphatidylglycerol to the sulfhydryl group of the N-terminal cysteine of a prolipoprotein, the first step in the formation of mature lipoproteins. The polypeptide is Phosphatidylglycerol--prolipoprotein diacylglyceryl transferase (Lactobacillus gasseri (strain ATCC 33323 / DSM 20243 / BCRC 14619 / CIP 102991 / JCM 1131 / KCTC 3163 / NCIMB 11718 / NCTC 13722 / AM63)).